The primary structure comprises 194 residues: dCTP deaminase (194 aa).

Residues Arg110–Arg115, Asp128, Val136–Glu138, Tyr171, Lys178, and Gln182 each bind dCTP. Glu138 serves as the catalytic Proton donor/acceptor.

Belongs to the dCTP deaminase family. In terms of assembly, homotrimer.

The catalysed reaction is dCTP + H2O + H(+) = dUTP + NH4(+). It participates in pyrimidine metabolism; dUMP biosynthesis; dUMP from dCTP (dUTP route): step 1/2. Catalyzes the deamination of dCTP to dUTP. This is dCTP deaminase from Pasteurella multocida (strain Pm70).